A 344-amino-acid chain; its full sequence is tRNA N6-adenosine threonylcarbamoyltransferase (344 aa).

Residues His-113 and His-117 each coordinate Fe cation. Residues 135-139 (LVSGG), Asp-169, Gly-182, Asp-186, and Asn-278 each bind substrate. Asp-306 provides a ligand contact to Fe cation. The disordered stretch occupies residues 325 to 344 (ESPISVGTDPSLSVETPQVF). Residues 326–344 (SPISVGTDPSLSVETPQVF) show a composition bias toward polar residues.

It belongs to the KAE1 / TsaD family. Requires Fe(2+) as cofactor.

The protein localises to the cytoplasm. It catalyses the reaction L-threonylcarbamoyladenylate + adenosine(37) in tRNA = N(6)-L-threonylcarbamoyladenosine(37) in tRNA + AMP + H(+). In terms of biological role, required for the formation of a threonylcarbamoyl group on adenosine at position 37 (t(6)A37) in tRNAs that read codons beginning with adenine. Is involved in the transfer of the threonylcarbamoyl moiety of threonylcarbamoyl-AMP (TC-AMP) to the N6 group of A37, together with TsaE and TsaB. TsaD likely plays a direct catalytic role in this reaction. This Corynebacterium glutamicum (strain R) protein is tRNA N6-adenosine threonylcarbamoyltransferase.